A 144-amino-acid polypeptide reads, in one-letter code: ATP synthase epsilon chain (144 aa).

It belongs to the ATPase epsilon chain family. As to quaternary structure, F-type ATPases have 2 components, CF(1) - the catalytic core - and CF(0) - the membrane proton channel. CF(1) has five subunits: alpha(3), beta(3), gamma(1), delta(1), epsilon(1). CF(0) has three main subunits: a, b and c.

The protein localises to the cell inner membrane. Produces ATP from ADP in the presence of a proton gradient across the membrane. The sequence is that of ATP synthase epsilon chain from Hydrogenovibrio crunogenus (strain DSM 25203 / XCL-2) (Thiomicrospira crunogena).